The chain runs to 314 residues: Hydroxyacyl-coenzyme A dehydrogenase, mitochondrial (314 aa).

The N-terminal 12 residues, 1–12 (MAFVTRQFVRSM), are a transit peptide targeting the mitochondrion. NAD(+) contacts are provided by residues 34-39 (GGGLMG) and Asp-57. Ser-73 contributes to the CoA binding site. Lys-75 is modified (N6-acetyllysine). Residue Lys-80 coordinates CoA. N6-succinyllysine is present on Lys-80. N6-acetyllysine; alternate is present on residues Lys-81 and Lys-87. An N6-succinyllysine; alternate mark is found at Lys-81 and Lys-87. Glu-122 is an NAD(+) binding site. Lys-125 is modified (N6-acetyllysine). Lys-127 serves as a coordination point for NAD(+). Lys-127 is modified (N6-(2-hydroxyisobutyryl)lysine). Lys-136 carries the post-translational modification N6-acetyllysine; alternate. Lys-136 carries the N6-succinyllysine; alternate modification. NAD(+) contacts are provided by Ser-149 and Asn-173. Ser-149 provides a ligand contact to CoA. The residue at position 179 (Lys-179) is an N6-acetyllysine. Lys-185, Lys-192, and Lys-202 each carry N6-acetyllysine; alternate. N6-succinyllysine; alternate occurs at positions 185, 192, and 202. Lys-206 is modified (N6-succinyllysine). N6-acetyllysine; alternate occurs at positions 212 and 241. N6-succinyllysine; alternate is present on residues Lys-212 and Lys-241. Lys-305 contacts NAD(+). N6-acetyllysine; alternate is present on Lys-312. Lys-312 is subject to N6-succinyllysine; alternate.

The protein belongs to the 3-hydroxyacyl-CoA dehydrogenase family. As to quaternary structure, homodimer. Interacts with GLUD1; this interaction inhibits the activation of glutamate dehydrogenase 1 (GLUD1). In terms of processing, succinylation at Lys-81, adjacent to a coenzyme A binding site. Desuccinylated by SIRT5.

The protein localises to the mitochondrion matrix. It carries out the reaction a (3S)-3-hydroxyacyl-CoA + NAD(+) = a 3-oxoacyl-CoA + NADH + H(+). The catalysed reaction is (3S)-3-hydroxybutanoyl-CoA + NAD(+) = acetoacetyl-CoA + NADH + H(+). It catalyses the reaction (3S)-hydroxydecanoyl-CoA + NAD(+) = 3-oxodecanoyl-CoA + NADH + H(+). The enzyme catalyses (3S)-hydroxyhexadecanoyl-CoA + NAD(+) = 3-oxohexadecanoyl-CoA + NADH + H(+). It functions in the pathway lipid metabolism; fatty acid beta-oxidation. Its function is as follows. Mitochondrial fatty acid beta-oxidation enzyme that catalyzes the third step of the beta-oxidation cycle for medium and short-chain 3-hydroxy fatty acyl-CoAs (C4 to C10). Plays a role in the control of insulin secretion by inhibiting the activation of glutamate dehydrogenase 1 (GLUD1), an enzyme that has an important role in regulating amino acid-induced insulin secretion. Plays a role in the maintenance of normal spermatogenesis through the reduction of fatty acid accumulation in the testes. The sequence is that of Hydroxyacyl-coenzyme A dehydrogenase, mitochondrial (Hadh) from Rattus norvegicus (Rat).